The sequence spans 439 residues: Homogentisate 1,2-dioxygenase (439 aa).

The active-site Proton acceptor is the histidine 293. Fe cation contacts are provided by histidine 336 and glutamate 342. Homogentisate contacts are provided by tyrosine 351 and histidine 372. Residue histidine 372 participates in Fe cation binding.

This sequence belongs to the homogentisate dioxygenase family. In terms of assembly, hexamer; dimer of trimers. Fe cation is required as a cofactor.

It carries out the reaction homogentisate + O2 = 4-maleylacetoacetate + H(+). It functions in the pathway amino-acid degradation; L-phenylalanine degradation; acetoacetate and fumarate from L-phenylalanine: step 4/6. Its function is as follows. Involved in the catabolism of homogentisate (2,5-dihydroxyphenylacetate or 2,5-OH-PhAc), a central intermediate in the degradation of phenylalanine and tyrosine. Catalyzes the oxidative ring cleavage of the aromatic ring of homogentisate to yield maleylacetoacetate. In Cupriavidus pinatubonensis (strain JMP 134 / LMG 1197) (Cupriavidus necator (strain JMP 134)), this protein is Homogentisate 1,2-dioxygenase.